The following is a 391-amino-acid chain: Formate-dependent phosphoribosylglycinamide formyltransferase (391 aa).

N(1)-(5-phospho-beta-D-ribosyl)glycinamide-binding positions include 20–21 and Glu80; that span reads EL. ATP is bound by residues Arg112, Lys153, 158–163, 193–196, and Glu201; these read SSGKGQ and EGFV. The ATP-grasp domain occupies 117–306; the sequence is RLAAEELGLP…EFALHVRAFT (190 aa). Residues Glu265 and Glu277 each coordinate Mg(2+). N(1)-(5-phospho-beta-D-ribosyl)glycinamide is bound by residues Asp284, Lys354, and 361–362; that span reads RR.

It belongs to the PurK/PurT family. In terms of assembly, homodimer.

The catalysed reaction is N(1)-(5-phospho-beta-D-ribosyl)glycinamide + formate + ATP = N(2)-formyl-N(1)-(5-phospho-beta-D-ribosyl)glycinamide + ADP + phosphate + H(+). It participates in purine metabolism; IMP biosynthesis via de novo pathway; N(2)-formyl-N(1)-(5-phospho-D-ribosyl)glycinamide from N(1)-(5-phospho-D-ribosyl)glycinamide (formate route): step 1/1. In terms of biological role, involved in the de novo purine biosynthesis. Catalyzes the transfer of formate to 5-phospho-ribosyl-glycinamide (GAR), producing 5-phospho-ribosyl-N-formylglycinamide (FGAR). Formate is provided by PurU via hydrolysis of 10-formyl-tetrahydrofolate. This Vibrio cholerae serotype O1 (strain ATCC 39315 / El Tor Inaba N16961) protein is Formate-dependent phosphoribosylglycinamide formyltransferase.